A 322-amino-acid polypeptide reads, in one-letter code: MSGIPRSLLGQCAVALLGANARSGLTLHHAFAAYSSAAAPAQSAALIKQLRERSGAPIADVKSMLVEHGWDMDKAYEALRKKGLAAAAKKASRHAAEGLVGASFAASAASSGGSSSSEASTSGGGRGSVVVVELNSETDFVARNELFQKLLREVMGAAHALGPAAALMSARTASGPSVSEAVTALAVQVRENVRLRRAFRVDSGAGGLVFPYVHQAAAPGLGKLASVVVLAPEPDDKAQPLVLDKVVEGRLGKLLSDWCLEAQRYVLEDELTVDKLMARLKKEVGQPVRVASFLRVQCGEGLGAKAGGGDFAAEVARIVSEA.

This sequence belongs to the EF-Ts family.

It localises to the mitochondrion. In terms of biological role, associates with the EF-Tu.GDP complex and induces the exchange of GDP to GTP. It remains bound to the aminoacyl-tRNA.EF-Tu.GTP complex up to the GTP hydrolysis stage on the ribosome. This is Elongation factor Ts, mitochondrial from Chlamydomonas reinhardtii (Chlamydomonas smithii).